The sequence spans 148 residues: Snaclec B9 (148 aa).

The signal sequence occupies residues 1-24 (MGRFIFVSFGLLVVFLSLSGTGAA). Intrachain disulfides connect cysteine 27–cysteine 38, cysteine 55–cysteine 144, and cysteine 121–cysteine 136. Residues 34–145 (YDQHCYKVFD…CRLLGHFVCK (112 aa)) form the C-type lectin domain. 2 N-linked (GlcNAc...) asparagine glycosylation sites follow: asparagine 57 and asparagine 60.

Belongs to the snaclec family. As to quaternary structure, heterodimer; disulfide-linked. In terms of tissue distribution, expressed by the venom gland.

Its subcellular location is the secreted. Its function is as follows. Interferes with one step of hemostasis (modulation of platelet aggregation, or coagulation cascade, for example). The sequence is that of Snaclec B9 from Macrovipera lebetinus (Levantine viper).